Here is a 180-residue protein sequence, read N- to C-terminus: Probable RNA 2'-phosphotransferase (180 aa).

This sequence belongs to the KptA/TPT1 family.

In terms of biological role, removes the 2'-phosphate from RNA via an intermediate in which the phosphate is ADP-ribosylated by NAD followed by a presumed transesterification to release the RNA and generate ADP-ribose 1''-2''-cyclic phosphate (APPR&gt;P). May function as an ADP-ribosylase. The chain is Probable RNA 2'-phosphotransferase from Thermococcus kodakarensis (strain ATCC BAA-918 / JCM 12380 / KOD1) (Pyrococcus kodakaraensis (strain KOD1)).